The following is a 910-amino-acid chain: Putative disease resistance protein At1g58400 (910 aa).

Residues Asp15 to Met57 adopt a coiled-coil conformation. The region spanning Arg148–Tyr460 is the NB-ARC domain. Gly191–Thr198 contributes to the ATP binding site. LRR repeat units follow at residues Leu580 to Lys604 and Leu605 to Leu628.

It belongs to the disease resistance NB-LRR family.

Potential disease resistance protein. The sequence is that of Putative disease resistance protein At1g58400 from Arabidopsis thaliana (Mouse-ear cress).